We begin with the raw amino-acid sequence, 435 residues long: Hydrogenobyrinate a,c-diamide synthase (435 aa).

The region spanning 247-435 (RIALARDAAF…TGSFFHLIAG (189 aa)) is the GATase cobBQ-type domain. The Nucleophile role is filled by Cys-329.

It belongs to the CobB/CbiA family. Mg(2+) is required as a cofactor.

It catalyses the reaction hydrogenobyrinate + 2 L-glutamine + 2 ATP + 2 H2O = hydrogenobyrinate a,c-diamide + 2 L-glutamate + 2 ADP + 2 phosphate + 2 H(+). The protein operates within cofactor biosynthesis; adenosylcobalamin biosynthesis; cob(II)yrinate a,c-diamide from precorrin-2 (aerobic route): step 9/10. Catalyzes the ATP-dependent amidation of the two carboxylate groups at positions a and c of hydrogenobyrinate, using either L-glutamine or ammonia as the nitrogen source. In Rhodobacter capsulatus (strain ATCC BAA-309 / NBRC 16581 / SB1003), this protein is Hydrogenobyrinate a,c-diamide synthase.